A 746-amino-acid chain; its full sequence is Methyl-CpG-binding domain-containing protein 13 (746 aa).

Short sequence motifs (nuclear localization signal) lie at residues glutamate 13–valine 20 and isoleucine 44–asparagine 51. Residues valine 29 to serine 104 enclose the MBD domain. Disordered regions lie at residues isoleucine 131–aspartate 157, leucine 169–glutamate 283, proline 295–threonine 328, threonine 348–proline 479, threonine 518–alanine 562, and glutamate 696–aspartate 746. The span at leucine 169–glutamate 180 shows a compositional bias: basic and acidic residues. The segment covering arginine 190–glutamate 199 has biased composition (polar residues). A compositionally biased stretch (basic and acidic residues) spans serine 244–glutamate 260. The Nuclear localization signal signature appears at glutamate 256 to asparagine 263. Positions valine 427 to serine 451 are enriched in polar residues. Positions valine 465–leucine 476 are enriched in basic residues. Composition is skewed to polar residues over residues proline 529–arginine 546 and lysine 702–threonine 730. Basic and acidic residues predominate over residues glycine 732 to aspartate 746.

It is found in the nucleus. Probable transcriptional regulator. This chain is Methyl-CpG-binding domain-containing protein 13 (MBD13), found in Arabidopsis thaliana (Mouse-ear cress).